We begin with the raw amino-acid sequence, 489 residues long: Glutamyl-tRNA(Gln) amidotransferase subunit A (489 aa).

Active-site charge relay system residues include Lys-78 and Ser-153. Catalysis depends on Ser-177, which acts as the Acyl-ester intermediate.

This sequence belongs to the amidase family. GatA subfamily. In terms of assembly, heterotrimer of A, B and C subunits.

It carries out the reaction L-glutamyl-tRNA(Gln) + L-glutamine + ATP + H2O = L-glutaminyl-tRNA(Gln) + L-glutamate + ADP + phosphate + H(+). Allows the formation of correctly charged Gln-tRNA(Gln) through the transamidation of misacylated Glu-tRNA(Gln) in organisms which lack glutaminyl-tRNA synthetase. The reaction takes place in the presence of glutamine and ATP through an activated gamma-phospho-Glu-tRNA(Gln). This is Glutamyl-tRNA(Gln) amidotransferase subunit A from Nitratidesulfovibrio vulgaris (strain DP4) (Desulfovibrio vulgaris).